A 352-amino-acid chain; its full sequence is Elongation factor Ts (352 aa).

Positions 81–84 are involved in Mg(2+) ion dislocation from EF-Tu; sequence TDFV.

The protein belongs to the EF-Ts family.

It localises to the cytoplasm. Its function is as follows. Associates with the EF-Tu.GDP complex and induces the exchange of GDP to GTP. It remains bound to the aminoacyl-tRNA.EF-Tu.GTP complex up to the GTP hydrolysis stage on the ribosome. This Campylobacter hominis (strain ATCC BAA-381 / DSM 21671 / CCUG 45161 / LMG 19568 / NCTC 13146 / CH001A) protein is Elongation factor Ts.